The following is a 586-amino-acid chain: DNA-directed RNA polymerase subunit beta' (586 aa).

Residues Cys-64, Cys-66, Cys-85, and Cys-88 each contribute to the Zn(2+) site. Mg(2+) contacts are provided by Asp-448, Asp-450, and Asp-452.

The protein belongs to the RNA polymerase beta' chain family. RpoC1 subfamily. As to quaternary structure, in plastids the minimal PEP RNA polymerase catalytic core is composed of four subunits: alpha, beta, beta', and beta''. When a (nuclear-encoded) sigma factor is associated with the core the holoenzyme is formed, which can initiate transcription. Mg(2+) is required as a cofactor. Requires Zn(2+) as cofactor.

The protein localises to the plastid. The protein resides in the chloroplast. It carries out the reaction RNA(n) + a ribonucleoside 5'-triphosphate = RNA(n+1) + diphosphate. In terms of biological role, DNA-dependent RNA polymerase catalyzes the transcription of DNA into RNA using the four ribonucleoside triphosphates as substrates. This chain is DNA-directed RNA polymerase subunit beta', found in Euglena gracilis.